Here is a 989-residue protein sequence, read N- to C-terminus: Bifunctional glutamine synthetase adenylyltransferase/adenylyl-removing enzyme (989 aa).

Positions Met-1–Ala-473 are adenylyl removase. The adenylyl transferase stretch occupies residues Asp-479–Glu-989.

It belongs to the GlnE family. The cofactor is Mg(2+).

The enzyme catalyses [glutamine synthetase]-O(4)-(5'-adenylyl)-L-tyrosine + phosphate = [glutamine synthetase]-L-tyrosine + ADP. It carries out the reaction [glutamine synthetase]-L-tyrosine + ATP = [glutamine synthetase]-O(4)-(5'-adenylyl)-L-tyrosine + diphosphate. In terms of biological role, involved in the regulation of glutamine synthetase GlnA, a key enzyme in the process to assimilate ammonia. When cellular nitrogen levels are high, the C-terminal adenylyl transferase (AT) inactivates GlnA by covalent transfer of an adenylyl group from ATP to specific tyrosine residue of GlnA, thus reducing its activity. Conversely, when nitrogen levels are low, the N-terminal adenylyl removase (AR) activates GlnA by removing the adenylyl group by phosphorolysis, increasing its activity. The regulatory region of GlnE binds the signal transduction protein PII (GlnB) which indicates the nitrogen status of the cell. This Xanthobacter autotrophicus (strain ATCC BAA-1158 / Py2) protein is Bifunctional glutamine synthetase adenylyltransferase/adenylyl-removing enzyme.